The sequence spans 247 residues: Cell division protein ZapD (247 aa).

The protein belongs to the ZapD family. In terms of assembly, interacts with FtsZ.

The protein resides in the cytoplasm. Its function is as follows. Cell division factor that enhances FtsZ-ring assembly. Directly interacts with FtsZ and promotes bundling of FtsZ protofilaments, with a reduction in FtsZ GTPase activity. The chain is Cell division protein ZapD from Erwinia tasmaniensis (strain DSM 17950 / CFBP 7177 / CIP 109463 / NCPPB 4357 / Et1/99).